The chain runs to 195 residues: Peptidyl-tRNA hydrolase (195 aa).

Tyrosine 18 lines the tRNA pocket. Histidine 23 functions as the Proton acceptor in the catalytic mechanism. TRNA is bound by residues phenylalanine 69, asparagine 71, and asparagine 117.

Belongs to the PTH family. As to quaternary structure, monomer.

The protein resides in the cytoplasm. The catalysed reaction is an N-acyl-L-alpha-aminoacyl-tRNA + H2O = an N-acyl-L-amino acid + a tRNA + H(+). Hydrolyzes ribosome-free peptidyl-tRNAs (with 1 or more amino acids incorporated), which drop off the ribosome during protein synthesis, or as a result of ribosome stalling. Functionally, catalyzes the release of premature peptidyl moieties from peptidyl-tRNA molecules trapped in stalled 50S ribosomal subunits, and thus maintains levels of free tRNAs and 50S ribosomes. The protein is Peptidyl-tRNA hydrolase of Alcanivorax borkumensis (strain ATCC 700651 / DSM 11573 / NCIMB 13689 / SK2).